A 362-amino-acid chain; its full sequence is Molybdenum import ATP-binding protein ModC (362 aa).

The 235-residue stretch at alanine 2–aspartate 236 folds into the ABC transporter domain. Glycine 34–threonine 41 is an ATP binding site. A Mop domain is found at glutamine 297 to alanine 362.

This sequence belongs to the ABC transporter superfamily. Molybdate importer (TC 3.A.1.8) family. The complex is composed of two ATP-binding proteins (ModC), two transmembrane proteins (ModB) and a solute-binding protein (ModA).

Its subcellular location is the cell inner membrane. It carries out the reaction molybdate(out) + ATP + H2O = molybdate(in) + ADP + phosphate + H(+). Functionally, part of the ABC transporter complex ModABC involved in molybdenum import. Responsible for energy coupling to the transport system. This Pseudomonas syringae pv. syringae (strain B728a) protein is Molybdenum import ATP-binding protein ModC.